Here is a 387-residue protein sequence, read N- to C-terminus: MTVLKMTDLDLQGKRVLIREDLNVPVKDGVVSSDARILASLPTIRLALEKGAAVMVCSHLGRPTEGEFSAENSLKPVADYLSKALGRDVPLVADYLDGVDVKAGEVVLFENVRFNKGEKKNADELAQQYAALCDVFVMDAFGTAHRAEGSTHGVAKFAKVAAAGPLLAAELEALGKALGAPAQPMTAIVAGSKVSTKLDVLNSLSGICNQLIVGGGIANTFLAAAGHKVGKSLYEPDLLDTARAIAAKVSVPLPTDVVVAKEFAESAAATVKLIADVADDDMILDIGPQTAAHFAELLKSSGTILWNGPVGVFEFDQFGEGTKTLAKAIAESQAFSIAGGGDTLAAIDKYGVAQQISYISTGGGAFLEFVEGKVLPAVEVLEQRAKA.

Residues 21 to 23 (DLN), arginine 36, 59 to 62 (HLGR), arginine 113, and arginine 146 each bind substrate. Residues lysine 197, glutamate 314, and 340-343 (GGDT) each bind ATP.

This sequence belongs to the phosphoglycerate kinase family. As to quaternary structure, monomer.

It localises to the cytoplasm. The enzyme catalyses (2R)-3-phosphoglycerate + ATP = (2R)-3-phospho-glyceroyl phosphate + ADP. Its pathway is carbohydrate degradation; glycolysis; pyruvate from D-glyceraldehyde 3-phosphate: step 2/5. The sequence is that of Phosphoglycerate kinase from Pseudomonas syringae pv. syringae (strain B728a).